The chain runs to 456 residues: MADGGSERADGRIVKMEVDYSPTVDQRLPECAKLAKEGRLQEVIETLLSLEKQTRTASDMVSTSRILVAVVKMCYEAKEWDLLNENIMLLSKRRSQLKQAVAKMVQQCCTYVEEITDLPIKLRLIDTLRMVTEGKIYVEIERARLTKTLATIKEQNGDVKEAASILQELQVETYGSMEKKERVEFILEQMRLCLAVKDYIRTQIISKKINTKFFQEENTEKLKLKYYNLMIQLDQHEGSYLSICKHYRAIYDTPCIQAESEKWQQALKSVVLYVILAPFDNEQSDLVHRISGDKKLEEIPKYKDLLKLFTTMELMRWSTLVEDYGMELRKGSLESPATDVFGSTEEGEKRWKDLKNRVVEHNIRIMAKYYTRITMKRMAQLLDLSVDESEAFLSNLVVNKTIFAKVDRLAGIINFQRPKDPNNLLNDWSQKLNSLMSLVNKTTHLIAKEEMIHNLQ.

Position 2 is an N-acetylalanine (Ala-2). Lys-92 participates in a covalent cross-link: Glycyl lysine isopeptide (Lys-Gly) (interchain with G-Cter in SUMO1); alternate. A Glycyl lysine isopeptide (Lys-Gly) (interchain with G-Cter in SUMO2); alternate cross-link involves residue Lys-92. N6-acetyllysine occurs at positions 221 and 368. The 179-residue stretch at 242–420 (SICKHYRAIY…GIINFQRPKD (179 aa)) folds into the PCI domain.

This sequence belongs to the proteasome subunit p55 family. Component of the 19S proteasome regulatory particle complex. The 26S proteasome consists of a 20S core particle (CP) and two 19S regulatory subunits (RP). The regulatory particle is made of a lid composed of 9 subunits including PSMD12, a base containing 6 ATPases and few additional components. Interacts with ERCC6.

In terms of biological role, component of the 26S proteasome, a multiprotein complex involved in the ATP-dependent degradation of ubiquitinated proteins. This complex plays a key role in the maintenance of protein homeostasis by removing misfolded or damaged proteins, which could impair cellular functions, and by removing proteins whose functions are no longer required. Therefore, the proteasome participates in numerous cellular processes, including cell cycle progression, apoptosis, or DNA damage repair. In Pongo abelii (Sumatran orangutan), this protein is 26S proteasome non-ATPase regulatory subunit 12 (PSMD12).